The following is a 195-amino-acid chain: Porimin (195 aa).

A signal peptide spans 1 to 23; that stretch reads MALCARAALLLGVLQVLALLGAA. At 24 to 152 the chain is on the extracellular side; sequence QDPTDAQGSA…PTKGKGSKFD (129 aa). N-linked (GlcNAc...) asparagine glycosylation is found at Asn36, Asn45, Asn51, Asn59, Asn109, and Asn115. The disordered stretch occupies residues 99–127; the sequence is VTPTASKSTPNASASPNSTHTSASMTTPA. Residues 101-126 are compositionally biased toward polar residues; that stretch reads PTASKSTPNASASPNSTHTSASMTTP. The chain crosses the membrane as a helical span at residues 153-173; sequence AGSFVGGIVLTLGVLSILYIG. The Cytoplasmic portion of the chain corresponds to 174–195; that stretch reads CKMYYSRRGIRYRSIDEHDAII. Ser187 bears the Phosphoserine mark.

The protein belongs to the CD164 family.

It is found in the membrane. Functionally, implicated in oncotic cell death, characterized by cell swelling, organelle swelling, vacuolization and increased membrane permeability. The polypeptide is Porimin (Tmem123) (Mus musculus (Mouse)).